Here is an 86-residue protein sequence, read N- to C-terminus: Alpha-mammal toxin Ts3 (86 aa).

An N-terminal signal peptide occupies residues 1–19; the sequence is MNYFILLVVVCLLTAGTEG. One can recognise an LCN-type CS-alpha/beta domain in the interval 21-82; sequence KDGYPVEYDN…EPTKTNGKCK (62 aa). Disulfide bonds link C31–C81, C35–C57, C43–C64, and C47–C66. The residue at position 83 (S83) is a Serine amide.

In terms of tissue distribution, expressed by the venom gland.

It is found in the secreted. Functionally, alpha toxins bind voltage-independently at site-3 of sodium channels (Nav) and inhibit the inactivation of the activated channels, thereby blocking neuronal transmission. This synthetic toxin inhibits inactivation of rat Nav1.4/SCN4A (when tested at 201 nM). In addition, it has been shown to cause a persistent sodium channel activation in nitrergic inhibitory fibers innervating the rabbit corpus cavernosum, resulting in NO release and cavernosal smooth muscle relaxation. This toxin is active against mammals. In terms of biological role, this synthetic peptide with a Ser at position 31 (C12S) acts as a bradykinin-potentiating peptide (BPP). Induces endothelium-dependent vasodilation that is reverted by NO synthase inhibitor, suggesting it activates molecular targets on vascular endothelium leading to NO production and vasodilation. It appears to induce vasodilation through muscarinic acetylcholine receptors (AChR) M2 (CHRM2) and M3 (CHRM3). Does not inhibit the angiotensin-converting enzyme (ACE). Does not act via bradykinin B2 receptor. The protein is Alpha-mammal toxin Ts3 of Tityus serrulatus (Brazilian scorpion).